The chain runs to 255 residues: 5-oxoprolinase subunit A (255 aa).

It belongs to the LamB/PxpA family. As to quaternary structure, forms a complex composed of PxpA, PxpB and PxpC.

It catalyses the reaction 5-oxo-L-proline + ATP + 2 H2O = L-glutamate + ADP + phosphate + H(+). Functionally, catalyzes the cleavage of 5-oxoproline to form L-glutamate coupled to the hydrolysis of ATP to ADP and inorganic phosphate. The polypeptide is 5-oxoprolinase subunit A (Corynebacterium efficiens (strain DSM 44549 / YS-314 / AJ 12310 / JCM 11189 / NBRC 100395)).